Consider the following 85-residue polypeptide: MAHKKAGGSSRNGRDSESKRLGVKRFGGESVLAGSIIVRQRGTKFHAGVNVGCGKDHTLFATATGTIKFEVKGPNNRKFVSIVAE.

Positions 1–22 are disordered; it reads MAHKKAGGSSRNGRDSESKRLG.

It belongs to the bacterial ribosomal protein bL27 family.

The polypeptide is Large ribosomal subunit protein bL27 (Tolumonas auensis (strain DSM 9187 / NBRC 110442 / TA 4)).